The following is a 186-amino-acid chain: Peptidyl-tRNA hydrolase (186 aa).

Tyr14 serves as a coordination point for tRNA. His19 functions as the Proton acceptor in the catalytic mechanism. Residues Tyr64, Asn66, and Asn112 each contribute to the tRNA site.

The protein belongs to the PTH family. As to quaternary structure, monomer.

The protein resides in the cytoplasm. The enzyme catalyses an N-acyl-L-alpha-aminoacyl-tRNA + H2O = an N-acyl-L-amino acid + a tRNA + H(+). Functionally, hydrolyzes ribosome-free peptidyl-tRNAs (with 1 or more amino acids incorporated), which drop off the ribosome during protein synthesis, or as a result of ribosome stalling. Catalyzes the release of premature peptidyl moieties from peptidyl-tRNA molecules trapped in stalled 50S ribosomal subunits, and thus maintains levels of free tRNAs and 50S ribosomes. This chain is Peptidyl-tRNA hydrolase, found in Bacillus cereus (strain ATCC 10987 / NRS 248).